A 164-amino-acid chain; its full sequence is Disulfide bond formation protein B (164 aa).

The Cytoplasmic portion of the chain corresponds to 1-4; the sequence is MRII. The chain crosses the membrane as a helical span at residues 5–21; that stretch reads FLLIALICAGLVSYALY. At 22–39 the chain is on the periplasmic side; the sequence is LQLADGLLPCPLCIFQRM. Residues Cys31 and Cys34 are joined by a disulfide bond. The chain crosses the membrane as a helical span at residues 40-56; the sequence is AYWLVGITALFAFIHHP. At 57-62 the chain is on the cytoplasmic side; that stretch reads QRLGRR. Residues 63-80 traverse the membrane as a helical segment; the sequence is IYCGLIILFSLAGAIVAG. The Periplasmic portion of the chain corresponds to 81–136; the sequence is RQAWLVRFPEAFECGISPEEAFLNELPLARWWPDMFEANGDCTDGTWQFLSLTIPD. Cys94 and Cys122 are joined by a disulfide. A helical transmembrane segment spans residues 137–155; sequence WSLLIFLAFSLIAGLLWRS. Residues 156–164 are Cytoplasmic-facing; that stretch reads RSISSSNLK.

This sequence belongs to the DsbB family.

The protein resides in the cell inner membrane. Required for disulfide bond formation in some periplasmic proteins. Acts by oxidizing the DsbA protein. The chain is Disulfide bond formation protein B from Nitrosomonas europaea (strain ATCC 19718 / CIP 103999 / KCTC 2705 / NBRC 14298).